Here is a 440-residue protein sequence, read N- to C-terminus: Asparagine--tRNA ligase (440 aa).

It belongs to the class-II aminoacyl-tRNA synthetase family. In terms of assembly, homodimer.

It localises to the cytoplasm. The enzyme catalyses tRNA(Asn) + L-asparagine + ATP = L-asparaginyl-tRNA(Asn) + AMP + diphosphate + H(+). The sequence is that of Asparagine--tRNA ligase from Roseiflexus sp. (strain RS-1).